The sequence spans 515 residues: Maturase K (515 aa).

It belongs to the intron maturase 2 family. MatK subfamily.

It is found in the plastid. The protein resides in the chloroplast. Usually encoded in the trnK tRNA gene intron. Probably assists in splicing its own and other chloroplast group II introns. The polypeptide is Maturase K (Pinus uncinata (Mountain pine)).